Reading from the N-terminus, the 78-residue chain is Translation initiation factor IF-1 (78 aa).

One can recognise an S1-like domain in the interval 1 to 72 (MAKEAEMEFE…TRGRITYRKI (72 aa)).

This sequence belongs to the IF-1 family. As to quaternary structure, component of the 30S ribosomal translation pre-initiation complex which assembles on the 30S ribosome in the order IF-2 and IF-3, IF-1 and N-formylmethionyl-tRNA(fMet); mRNA recruitment can occur at any time during PIC assembly.

It localises to the cytoplasm. Its function is as follows. One of the essential components for the initiation of protein synthesis. Stabilizes the binding of IF-2 and IF-3 on the 30S subunit to which N-formylmethionyl-tRNA(fMet) subsequently binds. Helps modulate mRNA selection, yielding the 30S pre-initiation complex (PIC). Upon addition of the 50S ribosomal subunit IF-1, IF-2 and IF-3 are released leaving the mature 70S translation initiation complex. This chain is Translation initiation factor IF-1, found in Mesoplasma florum (strain ATCC 33453 / NBRC 100688 / NCTC 11704 / L1) (Acholeplasma florum).